We begin with the raw amino-acid sequence, 260 residues long: UPF0758 protein Smed_1459 (260 aa).

The MPN domain maps to 138-260 (VLSSWSAVID…HVSLKGLQLF (123 aa)). Residues histidine 209, histidine 211, and aspartate 222 each coordinate Zn(2+). The short motif at 209–222 (HNHPSGDPTPSCAD) is the JAMM motif element.

This sequence belongs to the UPF0758 family.

This Sinorhizobium medicae (strain WSM419) (Ensifer medicae) protein is UPF0758 protein Smed_1459.